The sequence spans 306 residues: Homoserine kinase (306 aa).

91–101 (PLARGLGSSAA) contacts ATP.

This sequence belongs to the GHMP kinase family. Homoserine kinase subfamily.

Its subcellular location is the cytoplasm. It catalyses the reaction L-homoserine + ATP = O-phospho-L-homoserine + ADP + H(+). It functions in the pathway amino-acid biosynthesis; L-threonine biosynthesis; L-threonine from L-aspartate: step 4/5. Its function is as follows. Catalyzes the ATP-dependent phosphorylation of L-homoserine to L-homoserine phosphate. The protein is Homoserine kinase of Bacillus licheniformis (strain ATCC 14580 / DSM 13 / JCM 2505 / CCUG 7422 / NBRC 12200 / NCIMB 9375 / NCTC 10341 / NRRL NRS-1264 / Gibson 46).